We begin with the raw amino-acid sequence, 964 residues long: Glycine dehydrogenase (decarboxylating) (964 aa).

Lys-711 is modified (N6-(pyridoxal phosphate)lysine).

This sequence belongs to the GcvP family. The glycine cleavage system is composed of four proteins: P, T, L and H. Requires pyridoxal 5'-phosphate as cofactor.

The enzyme catalyses N(6)-[(R)-lipoyl]-L-lysyl-[glycine-cleavage complex H protein] + glycine + H(+) = N(6)-[(R)-S(8)-aminomethyldihydrolipoyl]-L-lysyl-[glycine-cleavage complex H protein] + CO2. The glycine cleavage system catalyzes the degradation of glycine. The P protein binds the alpha-amino group of glycine through its pyridoxal phosphate cofactor; CO(2) is released and the remaining methylamine moiety is then transferred to the lipoamide cofactor of the H protein. The sequence is that of Glycine dehydrogenase (decarboxylating) from Prochlorococcus marinus (strain SARG / CCMP1375 / SS120).